The primary structure comprises 319 residues: Beta-xylosidase (319 aa).

Residue D14 is the Proton acceptor of the active site. The active-site Proton donor is the E222.

The protein belongs to the glycosyl hydrolase 43 family.

The enzyme catalyses Hydrolysis of (1-&gt;4)-beta-D-xylans, to remove successive D-xylose residues from the non-reducing termini.. Functionally, exoxylanase capable of acting on certain xylans and xylooligosaccharides. The protein is Beta-xylosidase (xynB) of Xylanibacter ruminicola (Prevotella ruminicola).